Consider the following 941-residue polypeptide: MutS protein homolog 1 (941 aa).

ATP is bound at residue 747-754; that stretch reads GPNMAGKS.

Belongs to the DNA mismatch repair MutS family.

It localises to the cytoplasm. Its subcellular location is the mitochondrion. Functionally, involved in mitochondrial DNA repair. The polypeptide is MutS protein homolog 1 (msh1) (Schizosaccharomyces pombe (strain 972 / ATCC 24843) (Fission yeast)).